Consider the following 207-residue polypeptide: Guanylate kinase (207 aa).

A Guanylate kinase-like domain is found at 5–184 (GNLFIVSAPS…ALADLVAIIR (180 aa)). 12–19 (APSGAGKS) contacts ATP.

Belongs to the guanylate kinase family.

It localises to the cytoplasm. The catalysed reaction is GMP + ATP = GDP + ADP. Its function is as follows. Essential for recycling GMP and indirectly, cGMP. This chain is Guanylate kinase, found in Shewanella violacea (strain JCM 10179 / CIP 106290 / LMG 19151 / DSS12).